The primary structure comprises 648 residues: Threonine--tRNA ligase (648 aa).

The region spanning M1–T61 is the TGS domain. Positions D243–P549 are catalytic. C349, H400, and H526 together coordinate Zn(2+).

Belongs to the class-II aminoacyl-tRNA synthetase family. As to quaternary structure, homodimer. It depends on Zn(2+) as a cofactor.

The protein resides in the cytoplasm. The catalysed reaction is tRNA(Thr) + L-threonine + ATP = L-threonyl-tRNA(Thr) + AMP + diphosphate + H(+). Catalyzes the attachment of threonine to tRNA(Thr) in a two-step reaction: L-threonine is first activated by ATP to form Thr-AMP and then transferred to the acceptor end of tRNA(Thr). Also edits incorrectly charged L-seryl-tRNA(Thr). This is Threonine--tRNA ligase from Orientia tsutsugamushi (strain Boryong) (Rickettsia tsutsugamushi).